Here is a 366-residue protein sequence, read N- to C-terminus: Tetraacyldisaccharide 4'-kinase (366 aa).

Position 51-58 (51-58 (TVGGTGKT)) interacts with ATP.

The protein belongs to the LpxK family.

It catalyses the reaction a lipid A disaccharide + ATP = a lipid IVA + ADP + H(+). The protein operates within glycolipid biosynthesis; lipid IV(A) biosynthesis; lipid IV(A) from (3R)-3-hydroxytetradecanoyl-[acyl-carrier-protein] and UDP-N-acetyl-alpha-D-glucosamine: step 6/6. Functionally, transfers the gamma-phosphate of ATP to the 4'-position of a tetraacyldisaccharide 1-phosphate intermediate (termed DS-1-P) to form tetraacyldisaccharide 1,4'-bis-phosphate (lipid IVA). The sequence is that of Tetraacyldisaccharide 4'-kinase from Phocaeicola vulgatus (strain ATCC 8482 / DSM 1447 / JCM 5826 / CCUG 4940 / NBRC 14291 / NCTC 11154) (Bacteroides vulgatus).